The primary structure comprises 594 residues: tRNA (uracil-O(2)-)-methyltransferase (594 aa).

The protein belongs to the TRM44 family.

The protein localises to the cytoplasm. The enzyme catalyses uridine(44) in tRNA(Ser) + S-adenosyl-L-methionine = 2'-O-methyluridine(44) in tRNA(Ser) + S-adenosyl-L-homocysteine + H(+). Probable adenosyl-L-methionine (AdoMet)-dependent tRNA (uracil-O(2)-)-methyltransferase. This chain is tRNA (uracil-O(2)-)-methyltransferase (TRM44), found in Debaryomyces hansenii (strain ATCC 36239 / CBS 767 / BCRC 21394 / JCM 1990 / NBRC 0083 / IGC 2968) (Yeast).